Here is a 766-residue protein sequence, read N- to C-terminus: ABC-type oligopeptide transporter ABCB9 (766 aa).

Helical transmembrane passes span 7–27 (VVVTLAFMSVDICVTTAIYVF), 47–67 (VLDLWAACLYRSCLLLGATIG), 84–104 (LVITLVCLFVGIYAMVKLLLF), 116–136 (FWALFVWTYISLGASFLLWWL), 185–205 (VAFLVAASFFLIVAALGETFL), 225–245 (FSTAVVIVCLLAIGSSFAAGI), 319–339 (VFMFSLSWQLSLVTFMGFPII), and 416–436 (SGLTLLVVQVSILYYGGHLVI). The ABC transmembrane type-1 domain maps to 188 to 471 (LVAASFFLIV…VGSVYSGLMQ (284 aa)). The region spanning 504-740 (VDFENVTFTY…GGLYAKLVQR (237 aa)) is the ABC transporter domain. ATP is bound at residue 539–546 (GPSGSGKS).

This sequence belongs to the ABC transporter superfamily. ABCB family. MHC peptide exporter (TC 3.A.1.209) subfamily. In terms of assembly, homodimer. Interacts (via TMD0 region) with LAMP1; this interaction strongly stabilizes ABCB9 and protects ABCB9 against lysosomal degradation. Interacts (via TMD0 region) with LAMP2 (isoform LAMP-2B). Interacts (via TMD0) with YIF1B; this interaction allows (but is not essential) the ER-to-Golgi trafficking and strongly depends on a salt bridge within TMD0. Highly expressed in testis, and at moderate levels in brain, spinal cord, and thyroid. Not expressed in monocytes but strongly expressed during differentiation of monocytes to dendritic cells and macrophages.

It is found in the lysosome membrane. It catalyses the reaction a [oligopeptide](in) + ATP + H2O = a [oligopeptide](out) + ADP + phosphate + H(+). With respect to regulation, transport activity is limited by threshold levels of luminal peptide. ATP hydrolysis is reduced in the presence of the spatial challenging 18-mer peptide by 50% and the branched 16-mer peptide by 75%. Transport rate of the longer peptides is strongly reduced. In terms of biological role, ATP-dependent low-affinity peptide transporter which translocates a broad spectrum of peptides from the cytosol to the lysosomal lumen for degradation. Displays a broad peptide length specificity from 6-mer up to at least 59-mer peptides with an optimum of 23-mers. Binds and transports smaller and larger peptides with the same affinity. Favors positively charged, aromatic or hydrophobic residues in the N- and C-terminal positions whereas negatively charged residues as well as asparagine and methionine are not favored. The chain is ABC-type oligopeptide transporter ABCB9 from Homo sapiens (Human).